The chain runs to 289 residues: Epoxyqueuosine reductase (289 aa).

Aspartate 111 acts as the Proton donor in catalysis. The 30-residue stretch at 156 to 185 (QGDRPHSQHCGTCTRCLEACPTQAIVEPFV) folds into the 4Fe-4S ferredoxin-type domain. Cysteine 165, cysteine 168, cysteine 171, cysteine 175, cysteine 191, cysteine 219, cysteine 222, and cysteine 226 together coordinate [4Fe-4S] cluster.

The protein belongs to the QueG family. In terms of assembly, monomer. It depends on cob(II)alamin as a cofactor. [4Fe-4S] cluster is required as a cofactor.

The protein resides in the cytoplasm. The enzyme catalyses epoxyqueuosine(34) in tRNA + AH2 = queuosine(34) in tRNA + A + H2O. Its pathway is tRNA modification; tRNA-queuosine biosynthesis. Catalyzes the conversion of epoxyqueuosine (oQ) to queuosine (Q), which is a hypermodified base found in the wobble positions of tRNA(Asp), tRNA(Asn), tRNA(His) and tRNA(Tyr). The polypeptide is Epoxyqueuosine reductase (Synechocystis sp. (strain ATCC 27184 / PCC 6803 / Kazusa)).